A 301-amino-acid polypeptide reads, in one-letter code: Nucleosome assembly protein 1;3 (301 aa).

Positions 15–69 (VETLKNKLQALAEQHVDVLESLAPVVRKRVDVLIEIQSQHDELEAKFLEEKAALE) form a coiled coil. The short motif at 36 to 51 (LAPVVRKRVDVLIEIQ) is the Nuclear export signal element. The tract at residues 278-301 (DEDYGASWVDDEEDDDDEYSDEEA) is disordered.

It belongs to the nucleosome assembly protein (NAP) family.

The protein localises to the nucleus. It localises to the cytoplasm. In terms of biological role, may modulate chromatin structure by regulation of nucleosome assembly/disassembly. The chain is Nucleosome assembly protein 1;3 (NAP1;3) from Oryza sativa subsp. japonica (Rice).